A 341-amino-acid chain; its full sequence is G2/mitotic-specific cyclin C13-1 (341 aa).

Belongs to the cyclin family. Cyclin AB subfamily.

Functionally, essential for the control of the cell cycle at the G2/M (mitosis) transition. Interacts with the CDC2 and CDK2 protein kinases to form MPF. G2/M cyclins accumulate steadily during G2 and are abruptly destroyed at mitosis. The polypeptide is G2/mitotic-specific cyclin C13-1 (Daucus carota (Wild carrot)).